Reading from the N-terminus, the 377-residue chain is Exopolygalacturonase (377 aa).

The first 5 residues, 1 to 5, serve as a signal peptide directing secretion; the sequence is RGVQS. PbH1 repeat units follow at residues 159–184, 186–207, 209–229, 239–260, and 269–290; these read CEDITFQHVTVTAPGTSINTDGIHVG, SKGVTITNTKIATGDDCISIGP, SQNVTITQVNCGPGHGISIGS, VRGITVKGCTFSGTMNGVRVKT, and ATDLTFQDLTMNNVQNPVILDQ. Asp200 (proton donor) is an active-site residue. Residue Asn211 is glycosylated (N-linked (GlcNAc...) asparagine). His223 is an active-site residue. N-linked (GlcNAc...) asparagine glycosylation occurs at Asn345.

This sequence belongs to the glycosyl hydrolase 28 family. In terms of assembly, monomer. In terms of processing, glycosylated. Expressed in pollen (at protein level). Expressed in stem, but not in leaves (at protein level).

Its subcellular location is the secreted. The protein resides in the cell wall. The protein localises to the golgi apparatus. It is found in the endoplasmic reticulum. It localises to the vesicle. The catalysed reaction is [(1-&gt;4)-alpha-D-galacturonosyl](n) + H2O = alpha-D-galacturonate + [(1-&gt;4)-alpha-D-galacturonosyl](n-1). Its function is as follows. May function in depolymerizing pectin during pollen development, germination, and tube growth. Acts as an exo-polygalacturonase. In Platanus acerifolia (London plane tree), this protein is Exopolygalacturonase.